Consider the following 406-residue polypeptide: Imidazolonepropionase (406 aa).

Residues histidine 75 and histidine 77 each coordinate Fe(3+). Zn(2+)-binding residues include histidine 75 and histidine 77. 4-imidazolone-5-propanoate is bound by residues arginine 84, tyrosine 147, and histidine 180. Residue tyrosine 147 participates in N-formimidoyl-L-glutamate binding. Residue histidine 245 coordinates Fe(3+). Histidine 245 serves as a coordination point for Zn(2+). Glutamine 248 contacts 4-imidazolone-5-propanoate. Position 320 (aspartate 320) interacts with Fe(3+). Aspartate 320 is a Zn(2+) binding site. Positions 322 and 324 each coordinate N-formimidoyl-L-glutamate. Threonine 325 is a 4-imidazolone-5-propanoate binding site.

Belongs to the metallo-dependent hydrolases superfamily. HutI family. The cofactor is Zn(2+). It depends on Fe(3+) as a cofactor.

The protein localises to the cytoplasm. It catalyses the reaction 4-imidazolone-5-propanoate + H2O = N-formimidoyl-L-glutamate. The protein operates within amino-acid degradation; L-histidine degradation into L-glutamate; N-formimidoyl-L-glutamate from L-histidine: step 3/3. In terms of biological role, catalyzes the hydrolytic cleavage of the carbon-nitrogen bond in imidazolone-5-propanoate to yield N-formimidoyl-L-glutamate. It is the third step in the universal histidine degradation pathway. The chain is Imidazolonepropionase from Hyphomonas neptunium (strain ATCC 15444).